Consider the following 704-residue polypeptide: Ribosomal RNA large subunit methyltransferase K/L (704 aa).

One can recognise a THUMP domain in the interval 43–154 (TMYQSLLWSR…KEKASLSLDL (112 aa)).

Belongs to the methyltransferase superfamily. RlmKL family.

It is found in the cytoplasm. It catalyses the reaction guanosine(2445) in 23S rRNA + S-adenosyl-L-methionine = N(2)-methylguanosine(2445) in 23S rRNA + S-adenosyl-L-homocysteine + H(+). The enzyme catalyses guanosine(2069) in 23S rRNA + S-adenosyl-L-methionine = N(2)-methylguanosine(2069) in 23S rRNA + S-adenosyl-L-homocysteine + H(+). In terms of biological role, specifically methylates the guanine in position 2445 (m2G2445) and the guanine in position 2069 (m7G2069) of 23S rRNA. This is Ribosomal RNA large subunit methyltransferase K/L from Proteus mirabilis (strain HI4320).